Here is a 470-residue protein sequence, read N- to C-terminus: Cysteine--tRNA ligase (470 aa).

Cys-28 provides a ligand contact to Zn(2+). The short motif at 30–40 (PTVYNYIHIGN) is the 'HIGH' region element. The Zn(2+) site is built by Cys-212, His-237, and Glu-241. Positions 271-275 (KMSKS) match the 'KMSKS' region motif. Residue Lys-274 coordinates ATP.

Belongs to the class-I aminoacyl-tRNA synthetase family. In terms of assembly, monomer. Zn(2+) serves as cofactor.

It localises to the cytoplasm. It carries out the reaction tRNA(Cys) + L-cysteine + ATP = L-cysteinyl-tRNA(Cys) + AMP + diphosphate. This chain is Cysteine--tRNA ligase, found in Ligilactobacillus salivarius (strain UCC118) (Lactobacillus salivarius).